Reading from the N-terminus, the 252-residue chain is tRNA (guanine-N(1)-)-methyltransferase (252 aa).

Residues Gly-118 and 138–143 contribute to the S-adenosyl-L-methionine site; that span reads IGDYVL.

It belongs to the RNA methyltransferase TrmD family. In terms of assembly, homodimer.

It localises to the cytoplasm. The catalysed reaction is guanosine(37) in tRNA + S-adenosyl-L-methionine = N(1)-methylguanosine(37) in tRNA + S-adenosyl-L-homocysteine + H(+). Specifically methylates guanosine-37 in various tRNAs. This Pseudomonas paraeruginosa (strain DSM 24068 / PA7) (Pseudomonas aeruginosa (strain PA7)) protein is tRNA (guanine-N(1)-)-methyltransferase.